Consider the following 218-residue polypeptide: Pyridoxine/pyridoxamine 5'-phosphate oxidase (218 aa).

FMN contacts are provided by residues 66 to 71, Arg-87, Lys-88, and Gln-110; that span reads RVVLLK. Lys-71 serves as a coordination point for substrate. Substrate is bound by residues Tyr-128, Arg-132, and Ser-136. FMN-binding positions include 145–146 and Trp-190; that span reads QS. Substrate is bound at residue 196-198; the sequence is RLH. Arg-200 contacts FMN.

This sequence belongs to the pyridoxamine 5'-phosphate oxidase family. In terms of assembly, homodimer. FMN serves as cofactor.

It catalyses the reaction pyridoxamine 5'-phosphate + O2 + H2O = pyridoxal 5'-phosphate + H2O2 + NH4(+). It carries out the reaction pyridoxine 5'-phosphate + O2 = pyridoxal 5'-phosphate + H2O2. The protein operates within cofactor metabolism; pyridoxal 5'-phosphate salvage; pyridoxal 5'-phosphate from pyridoxamine 5'-phosphate: step 1/1. It participates in cofactor metabolism; pyridoxal 5'-phosphate salvage; pyridoxal 5'-phosphate from pyridoxine 5'-phosphate: step 1/1. Catalyzes the oxidation of either pyridoxine 5'-phosphate (PNP) or pyridoxamine 5'-phosphate (PMP) into pyridoxal 5'-phosphate (PLP). This chain is Pyridoxine/pyridoxamine 5'-phosphate oxidase, found in Anaplasma marginale (strain St. Maries).